The primary structure comprises 1027 residues: LLGL scribble cell polarity complex component 2 (1027 aa).

WD repeat units follow at residues 36-69, 76-117, 132-169, 193-227, 233-268, 282-324, 332-366, 388-464, 508-583, and 592-653; these read SALGYSPSLRILAIGTRSGAVKLYGAPGVEFMGL, VLQI…EESF, VTEILPHSSGELLYLGTESGNVFVVQLPGFRTLHDRTI, ALQEHPRDPNQILIGYSRGLVVIWDLQGSRALSHF, LENASWQRDGCLIVTCHSDGSHCQWPVSSDTQNPEP, AITK…GQQT, VIDFTVLSEADPAAAFDDPYALVVLAEEELVVIDL, TCSH…YKLS, QKIF…FVLV, and TSLA…LRQS. Position 653 is a phosphoserine (S653). Residues 654–669 are compositionally biased toward basic residues; that stretch reads FRRMRRSRVSSHKRRP. Residues 654-678 are disordered; sequence FRRMRRSRVSSHKRRPGGPTGEAQA. WD repeat units lie at residues 715-771, 780-832, 837-890, and 904-927; these read VRTL…KEIQ, GILV…VSAK, LTAL…VRYS, and VFTKYGQGFYLISPSEFERFSLST. The disordered stretch occupies residues 940-981; sequence TKAKKHNRPSNGNGTGLKMTSSGHVRNSKSQSDGDEKKPGPV. Polar residues predominate over residues 957 to 970; that stretch reads KMTSSGHVRNSKSQ. S971 and S1022 each carry phosphoserine.

The protein belongs to the WD repeat L(2)GL family. Interacts with GPSM2/LGN, PRKCI/aPKC and PARD6B/Par-6. The complex is enhanced during mitosis. Interacts with DCAF1. Post-translationally, phosphorylated at Ser-653 by PRKCI. Phosphorylation is enhanced during cell polarization induced by calcium. Phosphorylation may occur during the cell-cell contact-induced cell polarization and may contribute to the segregation of LLGL2 from the PRKCI/aPKC and PARD6B/Par-6 complex.

It localises to the cytoplasm. Its function is as follows. Part of a complex with GPSM2/LGN, PRKCI/aPKC and PARD6B/Par-6, which may ensure the correct organization and orientation of bipolar spindles for normal cell division. This complex plays roles in the initial phase of the establishment of epithelial cell polarity. The sequence is that of LLGL scribble cell polarity complex component 2 (Llgl2) from Mus musculus (Mouse).